Reading from the N-terminus, the 607-residue chain is Elongation factor 4 (607 aa).

Residues 11-193 form the tr-type G domain; it reads SKIRNFSIIA…QIVEKVPAPT (183 aa). GTP-binding positions include 23–28 and 140–143; these read DHGKST and NKID.

This sequence belongs to the TRAFAC class translation factor GTPase superfamily. Classic translation factor GTPase family. LepA subfamily.

The protein localises to the cell membrane. It carries out the reaction GTP + H2O = GDP + phosphate + H(+). Its function is as follows. Required for accurate and efficient protein synthesis under certain stress conditions. May act as a fidelity factor of the translation reaction, by catalyzing a one-codon backward translocation of tRNAs on improperly translocated ribosomes. Back-translocation proceeds from a post-translocation (POST) complex to a pre-translocation (PRE) complex, thus giving elongation factor G a second chance to translocate the tRNAs correctly. Binds to ribosomes in a GTP-dependent manner. The chain is Elongation factor 4 from Bacillus cereus (strain Q1).